A 258-amino-acid chain; its full sequence is Large ribosomal subunit protein bL28m (258 aa).

A mitochondrion-targeting transit peptide spans 1–21 (MQKIFRPFQLTRGFTSSVKNF).

Belongs to the bacterial ribosomal protein bL28 family. Component of the mitochondrial large ribosomal subunit (mt-LSU). Mature yeast 74S mitochondrial ribosomes consist of a small (37S) and a large (54S) subunit. The 37S small subunit contains a 15S ribosomal RNA (15S mt-rRNA) and 34 different proteins. The 54S large subunit contains a 21S rRNA (21S mt-rRNA) and 46 different proteins.

Its subcellular location is the mitochondrion. Its function is as follows. Component of the mitochondrial ribosome (mitoribosome), a dedicated translation machinery responsible for the synthesis of mitochondrial genome-encoded proteins, including at least some of the essential transmembrane subunits of the mitochondrial respiratory chain. The mitoribosomes are attached to the mitochondrial inner membrane and translation products are cotranslationally integrated into the membrane. This chain is Large ribosomal subunit protein bL28m (MRPL24), found in Saccharomyces cerevisiae (strain ATCC 204508 / S288c) (Baker's yeast).